The chain runs to 397 residues: Putative 8-amino-7-oxononanoate synthase (397 aa).

Residue Arg-22 participates in substrate binding. Position 109–110 (109–110 (GW)) interacts with pyridoxal 5'-phosphate. Residue His-139 participates in substrate binding. Pyridoxal 5'-phosphate contacts are provided by residues Ser-187, 212 to 215 (DEAH), and 241 to 244 (TFSK). Residue Lys-244 is modified to N6-(pyridoxal phosphate)lysine. A substrate-binding site is contributed by Thr-358.

Belongs to the class-II pyridoxal-phosphate-dependent aminotransferase family. BioF subfamily. In terms of assembly, homodimer. Requires pyridoxal 5'-phosphate as cofactor.

It carries out the reaction 6-carboxyhexanoyl-[ACP] + L-alanine + H(+) = (8S)-8-amino-7-oxononanoate + holo-[ACP] + CO2. The protein operates within cofactor biosynthesis; biotin biosynthesis. Functionally, catalyzes the decarboxylative condensation of pimeloyl-[acyl-carrier protein] and L-alanine to produce 8-amino-7-oxononanoate (AON), [acyl-carrier protein], and carbon dioxide. In Bordetella parapertussis (strain 12822 / ATCC BAA-587 / NCTC 13253), this protein is Putative 8-amino-7-oxononanoate synthase (bioF).